A 73-amino-acid chain; its full sequence is Large ribosomal subunit protein bL32c (73 aa).

It belongs to the bacterial ribosomal protein bL32 family.

It is found in the plastid. The protein localises to the chloroplast. This chain is Large ribosomal subunit protein bL32c, found in Jasminum nudiflorum (Winter jasmine).